Reading from the N-terminus, the 53-residue chain is Minor histocompatibility protein HMSD variant form (53 aa).

As to quaternary structure, ACC-6 forms a complex with MHC HLA-B*4403. As to expression, highly expressed in dendritic cells and primary leukemia cells, especially those of myeloid lineage. ACC-6 expression is limited to cells of the hematopoietic lineage.

In terms of biological role, this splice variant of HMSD is the precursor of the histocompatibility antigen ACC-6. More generally, minor histocompatibility antigens (mHags) refer to immunogenic peptide which, when complexed with MHC, can generate an immune response after recognition by specific T-cells. The peptides are derived from polymorphic intracellular proteins, which are cleaved by normal pathways of antigen processing. The binding of these peptides to MHC class I or class II molecules and its expression on the cell surface can stimulate T-cell responses and thereby trigger graft rejection or graft-versus-host disease (GVHD) after hematopoietic stem cell transplantation from HLA-identical sibling donor. GVHD is a frequent complication after bone marrow transplantation (BMT), due to mismatch of minor histocompatibility antigen in HLA-matched sibling marrow transplants. However, associated with GVHD, a favorable graft-versus-leukemia (GVL) can be induced by donor-recipient disparities in mHags. ACC-6 is presented to the cell surface by MHC HLA-B*4403. This complex specifically elicits donor-cytotoxic T-lymphocyte (CTL) reactivity against hematologic malignancies after treatment by HLA-identical allogenic BMT. It induces cell recognition and lysis by CTL. Immunogenicity of most autosomal mHags results from single-nucleotide polymorphisms that cause amino-acid substitutions within epitopes, leading to the differential recognition of peptides between donor and recipient. The polypeptide is Minor histocompatibility protein HMSD variant form (HMSD) (Homo sapiens (Human)).